The primary structure comprises 239 residues: Large ribosomal subunit protein uL3 (239 aa).

An N5-methylglutamine modification is found at Q151.

The protein belongs to the universal ribosomal protein uL3 family. Part of the 50S ribosomal subunit. Forms a cluster with proteins L14 and L19. Methylated by PrmB.

Its function is as follows. One of the primary rRNA binding proteins, it binds directly near the 3'-end of the 23S rRNA, where it nucleates assembly of the 50S subunit. The sequence is that of Large ribosomal subunit protein uL3 from Ruegeria sp. (strain TM1040) (Silicibacter sp.).